We begin with the raw amino-acid sequence, 303 residues long: Putative CRISPR-associated endonuclease Cas1 2 (303 aa).

E149 provides a ligand contact to Mn(2+).

This sequence belongs to the CRISPR-associated endonuclease Cas1 family. Homodimer, forms a heterotetramer with a Cas2 homodimer. Mg(2+) serves as cofactor. Requires Mn(2+) as cofactor.

In terms of biological role, CRISPR (clustered regularly interspaced short palindromic repeat), is an adaptive immune system that provides protection against mobile genetic elements (viruses, transposable elements and conjugative plasmids). CRISPR clusters contain sequences complementary to antecedent mobile elements and target invading nucleic acids. CRISPR clusters are transcribed and processed into CRISPR RNA (crRNA). Acts as a dsDNA endonuclease. Involved in the integration of spacer DNA into the CRISPR cassette. This Methanospirillum hungatei JF-1 (strain ATCC 27890 / DSM 864 / NBRC 100397 / JF-1) protein is Putative CRISPR-associated endonuclease Cas1 2.